Consider the following 201-residue polypeptide: Dephospho-CoA kinase (201 aa).

Residues 4-201 (TIGLTGGIAS…ILKQWDALEK (198 aa)) enclose the DPCK domain. 12 to 17 (ASGKST) is an ATP binding site.

Belongs to the CoaE family.

The protein resides in the cytoplasm. The enzyme catalyses 3'-dephospho-CoA + ATP = ADP + CoA + H(+). It functions in the pathway cofactor biosynthesis; coenzyme A biosynthesis; CoA from (R)-pantothenate: step 5/5. Functionally, catalyzes the phosphorylation of the 3'-hydroxyl group of dephosphocoenzyme A to form coenzyme A. In Geobacillus kaustophilus (strain HTA426), this protein is Dephospho-CoA kinase.